The chain runs to 418 residues: MDDLLNSVSFSNASNPHNAWGSENISNSNSAIPSITNDVSFSMEASVWKENALNLDTFNLKDINEKLDYTFGVVKPPKRISLASKDYIGITATSETNFRQLIRLGYNEKSLGELKQGTISRLLKEHMTLWNQERSNVNRKSNVLFCWSTAYQKQKRKTASYTNSPVTPPINDKNILLPEQSPLSNFSTTKISSINVPSDILDFSNLSSNEIPKDYSSSTALLNNTVAVKQDHKLSANTFLSSPVKLIERESNSCSTISINKEDEVVPKSPLSLDRKKVDEVEEHSSIAKLDSEEKIRETKKKNSSTSLSPDPTSDNFEWGSWVSSQDTSKNSSNLASASVDDVSEESQVEPNTLIFQNFSSPSTSLSAPKDTPAVIQSINTSFLNNERAGRGNIKTVDQNQLINRIVDKLPDLSYLVD.

A compositionally biased stretch (basic and acidic residues) spans Glu282–Arg297. The segment at Glu282–Glu346 is disordered. The segment covering Ser304–Asn316 has biased composition (low complexity). Residues Trp322–Ser337 show a composition bias toward polar residues.

This is an uncharacterized protein from Schizosaccharomyces pombe (strain 972 / ATCC 24843) (Fission yeast).